The chain runs to 547 residues: (E)-beta-caryophyllene synthase (547 aa).

Residues D302 and D306 each contribute to the Mg(2+) site. The substrate site is built by D302, D306, R443, and N446. A DDXXD motif motif is present at residues 302 to 306 (DDLYD). N446 and E454 together coordinate Mg(2+).

It belongs to the terpene synthase family. Monomer. The cofactor is Mg(2+). Mn(2+) serves as cofactor.

The protein localises to the cytoplasm. The enzyme catalyses (2E,6E)-farnesyl diphosphate = (-)-(E)-beta-caryophyllene + diphosphate. It functions in the pathway secondary metabolite biosynthesis; terpenoid biosynthesis. In terms of biological role, component of the volatile terpenes biosynthesis pathways. Sesquiterpene synthase that converts farnesyl diphosphate to (E)-beta-caryophyllene. Involved in indirect defense by producing volatile signals attracting natural enemies of herbivores. This Zea mays (Maize) protein is (E)-beta-caryophyllene synthase.